A 1406-amino-acid polypeptide reads, in one-letter code: Protein FAM135B (1406 aa).

2 disordered regions span residues W519–A548 and S770–G820. 2 positions are modified to phosphoserine: S777 and S778. Polar residues predominate over residues K804–C816.

This sequence belongs to the FAM135 family.

The polypeptide is Protein FAM135B (FAM135B) (Homo sapiens (Human)).